A 554-amino-acid polypeptide reads, in one-letter code: MASSQVGDMVNGNAEPTRHLAKFPPSLWGDRFTSFTLDKQLWDKYGNEIEVLKEQVRSMVVAGGRKAAEQINLINVLERLGVSYHFEKEIEEQLEQLFAKFEDNEDYDLFTIALHFRIFRQHGYKMSCDVFNKFRDSNCEFKETVSNDVQGMLSLYEATYLKIRGEGFLDEAHAFTIAQLESLVEGPHLSSDLSEQVMHALKQSIHRGFPRLEAKHFISFYEKDASRNETLLRLAKLDFNQLQLSHREELCHIFRWWKELDLISKVPYARDRAVECFFWSTCAYYEPQHSVGRAGLTKIMLLLSVTDDTYDAYGTYNELKLYTNAVQRWDVSAMDELPDYMKALYRALLNVYDEVERDLAKQGRAYGVHHSKEAFKEIVRSYEIEAEWFKEGYVASFEEYMKNALVTSTGRLHTTSCFMGLEADVATTEAFEWILTKPKMVAASGAIGRLVDDVMSHDEEQERGHVATGLDCYMKQHGVSKQEAIVELYKMIENAWRDINEEMLKPTAISMKLLIRVLNLSRISDVVYKYVDGYTHPEIIKDHVISLFEDPIPM.

2 residues coordinate Mg(2+): Asp307 and Asp311. The short motif at 326–330 (VQRWD) is the DDXXD motif element. 3 residues coordinate Mg(2+): Asp452, Ser456, and Glu460.

Belongs to the terpene synthase family. The cofactor is Mg(2+).

It carries out the reaction (2E,6E)-farnesyl diphosphate + H2O = valerianol + diphosphate. The protein operates within secondary metabolite biosynthesis; terpenoid biosynthesis. In terms of biological role, terpene synthase that catalyzes the biosynthesis of the terpene valerianol, which is a volatile compound of floral scent. The chain is Valerianol synthase TPS1C from Camellia hiemalis (Camellia).